The following is a 415-amino-acid chain: NAD-dependent protein deacetylase hst4 (415 aa).

The interval 1–26 (MKVEEHVPLIQESRKRKCQSSENASK) is disordered. In terms of domain architecture, Deacetylase sirtuin-type spans 40 to 337 (TGNENVDLSP…RRLKPLLDAP (298 aa)). NAD(+)-binding positions include 65-84 (GAGISCDAGIPDFRSSEGLF) and 153-156 (QNID). The active-site Proton acceptor is His-184. 4 residues coordinate Zn(2+): Cys-192, Cys-195, Cys-214, and Cys-217. Residues 273-275 (GTS), 303-305 (NYD), and Leu-323 each bind NAD(+).

Belongs to the sirtuin family. Class I subfamily. Zn(2+) serves as cofactor.

It is found in the nucleus. Its subcellular location is the nucleolus. It carries out the reaction N(6)-acetyl-L-lysyl-[protein] + NAD(+) + H2O = 2''-O-acetyl-ADP-D-ribose + nicotinamide + L-lysyl-[protein]. Its function is as follows. NAD-dependent histone deacetylase, which contributes to both telomeric and centromeric silencing, proper cell cycle progression, DNA damage control, recombination, and genomic maintenance. This chain is NAD-dependent protein deacetylase hst4 (hst4), found in Schizosaccharomyces pombe (strain 972 / ATCC 24843) (Fission yeast).